A 345-amino-acid polypeptide reads, in one-letter code: Dimethyladenosine transferase 1, mitochondrial (345 aa).

A mitochondrion-targeting transit peptide spans 1–27 (MAASGKLGTFRLPPLPTIREIIKLFGL). Leu38, Gly63, Glu85, Lys86, Asp111, Val112, and Asn141 together coordinate S-adenosyl-L-methionine.

This sequence belongs to the class I-like SAM-binding methyltransferase superfamily. rRNA adenine N(6)-methyltransferase family. KsgA subfamily. Interacts with mitochondrial RNA polymerase POLRMT. Interacts with TFAM. Remains bound to the maturing mtSSU until the late stages of assembly. As to expression, ubiquitously expressed.

It is found in the mitochondrion. The catalysed reaction is adenosine(N)/adenosine(N+1) in rRNA + 4 S-adenosyl-L-methionine = N(6)-dimethyladenosine(N)/N(6)-dimethyladenosine(N+1) in rRNA + 4 S-adenosyl-L-homocysteine + 4 H(+). Mitochondrial methyltransferase which uses S-adenosyl methionine to dimethylate two highly conserved adjacent adenosine residues (A1006 and A1007) within the loop of helix 45 at the 3-prime end of 12S rRNA, thereby regulating the assembly or stability of the small subunit of the mitochondrial ribosome. Also required for basal transcription of mitochondrial DNA, probably via its interaction with POLRMT and TFAM. Stimulates transcription independently of the methyltransferase activity. The protein is Dimethyladenosine transferase 1, mitochondrial (Tfb1m) of Mus musculus (Mouse).